The following is a 97-amino-acid chain: Sperm protein associated with the nucleus on the X chromosome A (97 aa).

Positions 1–49 (MDKQSSAGGVKRSVPCDSNEANEMMPETPTGDSDPQPAPKKMKTSESST) are disordered. Residues 37 to 45 (PAPKKMKTS) carry the Nuclear localization signal motif.

The protein belongs to the SPAN-X family. As to expression, detected in testis and sperm.

It localises to the cytoplasm. Its subcellular location is the nucleus. The sequence is that of Sperm protein associated with the nucleus on the X chromosome A from Homo sapiens (Human).